We begin with the raw amino-acid sequence, 84 residues long: Small ribosomal subunit protein bS20 (84 aa).

Belongs to the bacterial ribosomal protein bS20 family.

Binds directly to 16S ribosomal RNA. This is Small ribosomal subunit protein bS20 from Bacteroides fragilis (strain ATCC 25285 / DSM 2151 / CCUG 4856 / JCM 11019 / LMG 10263 / NCTC 9343 / Onslow / VPI 2553 / EN-2).